Reading from the N-terminus, the 280-residue chain is Borealin (280 aa).

Residues 140–153 (KVAAKKPSTARRTR) show a composition bias toward basic residues. Residues 140–187 (KVAAKKPSTARRTRASVGNVANTSKRTSKRGRATPSASKQAETSLLGY) form a disordered region.

This sequence belongs to the borealin family. Component of the CPC at least composed of survivin/birc5, incenp, cdca8/borealin and/or cdca9/dasra-A, and aurkb/aurora-B. Interacts with incenp (via N-terminus).

The protein resides in the nucleus. The protein localises to the chromosome. It localises to the centromere. Its subcellular location is the cytoplasm. It is found in the cytoskeleton. The protein resides in the spindle. Component of the chromosomal passenger complex (CPC), a complex that acts as a key regulator of mitosis. The CPC complex has essential functions at the centromere in ensuring correct chromosome alignment and segregation and is required for chromatin-induced microtubule stabilization and spindle assembly. Contributes to CPC function by facilitating loading of the CPC onto chromosomes. The protein is Borealin (cdca8) of Xenopus laevis (African clawed frog).